We begin with the raw amino-acid sequence, 104 residues long: MASKIRRDDEVIILAGKDKGKTGKVTKVLVEDGKVFVEGINLIKKHTKPVPQLQQPGGIVEKEAPLQVSNVAIVNSATGKADRVGFRIEDGKKVRFFKSNNELI.

This sequence belongs to the universal ribosomal protein uL24 family. Part of the 50S ribosomal subunit.

One of two assembly initiator proteins, it binds directly to the 5'-end of the 23S rRNA, where it nucleates assembly of the 50S subunit. Functionally, one of the proteins that surrounds the polypeptide exit tunnel on the outside of the subunit. In Colwellia psychrerythraea (strain 34H / ATCC BAA-681) (Vibrio psychroerythus), this protein is Large ribosomal subunit protein uL24.